A 365-amino-acid chain; its full sequence is Flagellar P-ring protein (365 aa).

The N-terminal stretch at 1–20 (MKLPHFFVLAALVLSGAAHA) is a signal peptide.

The protein belongs to the FlgI family. The basal body constitutes a major portion of the flagellar organelle and consists of four rings (L,P,S, and M) mounted on a central rod.

It is found in the periplasm. The protein resides in the bacterial flagellum basal body. Functionally, assembles around the rod to form the L-ring and probably protects the motor/basal body from shearing forces during rotation. The polypeptide is Flagellar P-ring protein (Thiobacillus denitrificans (strain ATCC 25259 / T1)).